The sequence spans 79 residues: Exodeoxyribonuclease 7 small subunit (79 aa).

This sequence belongs to the XseB family. As to quaternary structure, heterooligomer composed of large and small subunits.

The protein resides in the cytoplasm. The catalysed reaction is Exonucleolytic cleavage in either 5'- to 3'- or 3'- to 5'-direction to yield nucleoside 5'-phosphates.. Its function is as follows. Bidirectionally degrades single-stranded DNA into large acid-insoluble oligonucleotides, which are then degraded further into small acid-soluble oligonucleotides. This chain is Exodeoxyribonuclease 7 small subunit, found in Shouchella clausii (strain KSM-K16) (Alkalihalobacillus clausii).